The primary structure comprises 454 residues: Glutamyl-tRNA reductase (454 aa).

Residues 49-52, S109, 114-116, and Q120 each bind substrate; these read TCNR and ETQ. C50 acts as the Nucleophile in catalysis. 189–194 lines the NADP(+) pocket; the sequence is GAGKMS. Positions 432–442 are enriched in basic and acidic residues; the sequence is DHAEQSWKEGQ. The disordered stretch occupies residues 432-454; the sequence is DHAEQSWKEGQRPSLNQGMALRT.

This sequence belongs to the glutamyl-tRNA reductase family. Homodimer.

It catalyses the reaction (S)-4-amino-5-oxopentanoate + tRNA(Glu) + NADP(+) = L-glutamyl-tRNA(Glu) + NADPH + H(+). Its pathway is porphyrin-containing compound metabolism; protoporphyrin-IX biosynthesis; 5-aminolevulinate from L-glutamyl-tRNA(Glu): step 1/2. Catalyzes the NADPH-dependent reduction of glutamyl-tRNA(Glu) to glutamate 1-semialdehyde (GSA). The polypeptide is Glutamyl-tRNA reductase (Shouchella clausii (strain KSM-K16) (Alkalihalobacillus clausii)).